Reading from the N-terminus, the 456-residue chain is MKCEHCTRKECSKKSKTDDQENVSVDVPSPAQENEEKGEFHKLADAKIFLSDCLACDSCVTVEEGVQLSQQSAKDFFHVLNLNKRCDTSKHKVLVVSVCPQSLPYFAAKFNLSVTDASRRLCGFLKSLGVHYVFDTTIAADFSILESQKEFVRRYHQHSEEQRELPMLTSACPGWVRYAERVLGRPIIPYLCTAKSPQQVMGSLVKDYFARQQSLAPEKIFHIVVAPCYDKKLEALREGLSPTLNGARGTDCVLTSGEIAQIMEQSDLSVKDIAVDTLFGDVKEMAVRRHDGVSSDGHLAHVFRHAAKELFGEHVEEITYRALRNKDFHEVTLEKNGEVLLRFAAAYGFRNIQNMIMKLKKGKFPYHFVEVLACPRGCLNGRGQAQTEDGHTDRALLQQMEGIYSGIPVWPPESSTHVQELYQEWLEGTESPKVQEVLHTSYQSLEPCTDSLDIKW.

The segment at 12-36 is disordered; it reads SKKSKTDDQENVSVDVPSPAQENEE. A Phosphoserine modification is found at Ser29.

The protein belongs to the NARF family. As to quaternary structure, interacts with LMNA and binds to the farnesylated C-terminal domain.

Its subcellular location is the nucleus. In Rattus norvegicus (Rat), this protein is Nuclear prelamin A recognition factor (Narf).